The following is a 131-amino-acid chain: MDFQQLADVADKWCSNTPFDLIATEETERRMDFYADPGVSFYVLCPESGCGDHFHVWSESEDCLPFLQLAQDYISSCGKKTLHEILEKVFKSFRPLLGLPDVDDDTFEEYNADVEEEEPEADHQQMGVSQQ.

Over residues 107–120 the composition is skewed to acidic residues; it reads FEEYNADVEEEEPE. The tract at residues 107-131 is disordered; it reads FEEYNADVEEEEPEADHQQMGVSQQ.

Belongs to the MTURN family.

It localises to the cytoplasm. In terms of biological role, involved in early neuronal development; required for cell cycle exit and differentiation of primary neurons. Cooperates synergistically with pak3 to promote primary neural differentiation within the neural plate. May play a role in promoting megakaryocyte differentiation. This is Maturin (mturn) from Xenopus laevis (African clawed frog).